We begin with the raw amino-acid sequence, 136 residues long: Holo-[acyl-carrier-protein] synthase (136 aa).

Residues D8 and E62 each coordinate Mg(2+).

It belongs to the P-Pant transferase superfamily. AcpS family. Mg(2+) is required as a cofactor.

The protein resides in the cytoplasm. It catalyses the reaction apo-[ACP] + CoA = holo-[ACP] + adenosine 3',5'-bisphosphate + H(+). Functionally, transfers the 4'-phosphopantetheine moiety from coenzyme A to a Ser of acyl-carrier-protein. The protein is Holo-[acyl-carrier-protein] synthase of Polynucleobacter necessarius subsp. necessarius (strain STIR1).